The primary structure comprises 482 residues: Keratin, type I cytoskeletal 39 (482 aa).

The segment at 1-24 (MDTKGSTVTISSSTPPQNCSGNTN) is disordered. A head region spans residues 1-91 (MDTKGSTVTI…RCTEGINTHE (91 aa)). The region spanning 91–402 (EKETMQILNE…SLLESLDGRL (312 aa)) is the IF rod domain. The coil 1A stretch occupies residues 92–126 (KETMQILNERLANYLEKVRMLEGENADLEDKIQEA). The interval 127 to 137 (CSKALPILCPD) is linker 1. Residues 138-238 (YLSYYTTIEE…HEEEVNSLQC (101 aa)) are coil 1B. A linker 12 region spans residues 239–254 (QLGDRINIEVTAAPSV). A coil 2 region spans residues 255–398 (DLNQILQEMR…ATYRSLLESL (144 aa)). The tail stretch occupies residues 399–482 (DGRLPCNPCA…PCYITRATKV (84 aa)).

It belongs to the intermediate filament family. As to quaternary structure, heterotetramer of two type I and two type II keratins.

In terms of biological role, may play a role in late hair differentiation. The chain is Keratin, type I cytoskeletal 39 (Krt39) from Mus musculus (Mouse).